Here is a 282-residue protein sequence, read N- to C-terminus: Protein OS-9 homolog (282 aa).

The first 23 residues, 1-23 (MRITQILLCLVIVALSSSSHVWS), serve as a signal peptide directing secretion. Asparagine 94 carries N-linked (GlcNAc...) asparagine glycosylation. The MRH domain occupies 120-239 (EKCLFRQEGW…TVQCPTLCKH (120 aa)). A disulfide bridge connects residues cysteine 122 and cysteine 135. Tryptophan 129, tryptophan 130, and glutamine 142 together coordinate a mannooligosaccharide derivative. Asparagine 169 and asparagine 190 each carry an N-linked (GlcNAc...) asparagine glycan. Cystine bridges form between cysteine 194/cysteine 225 and cysteine 209/cysteine 237. Residues aspartate 195, arginine 201, glutamate 221, and tyrosine 227 each contribute to the a mannooligosaccharide derivative site. Residues 262 to 276 (DATRNKEEQAVDESP) show a composition bias toward basic and acidic residues. The interval 262 to 282 (DATRNKEEQAVDESPKMIADS) is disordered.

This sequence belongs to the OS-9 family. As to quaternary structure, interacts with HRD3A.

The protein resides in the endoplasmic reticulum. In terms of biological role, lectin which functions in endoplasmic reticulum (ER) quality control and ER-associated degradation (ERAD). May bind terminally misfolded non-glycosylated proteins as well as improperly folded glycoproteins, retain them in the ER, and possibly transfer them to the ubiquitination machinery and promote their degradation. Targets the misfolded LRR receptor kinase BRI1 and the misfolded receptor-like kinase EFR. This Arabidopsis thaliana (Mouse-ear cress) protein is Protein OS-9 homolog.